A 341-amino-acid chain; its full sequence is Glycerol-3-phosphate dehydrogenase [NAD(P)+] (341 aa).

Residues Ser14, Phe15, Arg35, and Lys108 each coordinate NADPH. Sn-glycerol 3-phosphate contacts are provided by Lys108 and Gly136. Position 140 (Ser140) interacts with NADPH. Positions 191, 244, 254, 255, and 256 each coordinate sn-glycerol 3-phosphate. The active-site Proton acceptor is the Lys191. An NADPH-binding site is contributed by Arg255. 2 residues coordinate NADPH: Val279 and Glu281.

The protein belongs to the NAD-dependent glycerol-3-phosphate dehydrogenase family.

It is found in the cytoplasm. The enzyme catalyses sn-glycerol 3-phosphate + NAD(+) = dihydroxyacetone phosphate + NADH + H(+). It catalyses the reaction sn-glycerol 3-phosphate + NADP(+) = dihydroxyacetone phosphate + NADPH + H(+). It functions in the pathway membrane lipid metabolism; glycerophospholipid metabolism. Its function is as follows. Catalyzes the reduction of the glycolytic intermediate dihydroxyacetone phosphate (DHAP) to sn-glycerol 3-phosphate (G3P), the key precursor for phospholipid synthesis. The polypeptide is Glycerol-3-phosphate dehydrogenase [NAD(P)+] (Pseudomonas putida (strain GB-1)).